The following is a 510-amino-acid chain: Scarecrow-like protein 29 (510 aa).

The interval 90 to 142 is disordered; the sequence is LDLPPEIQQPNDQSRKRSHDGFLEAQQVKKSARSKRKAIKSSEKSSKDGNKEG. A compositionally biased stretch (basic and acidic residues) spans 102–111; that stretch reads QSRKRSHDGF. Residues 119-128 are compositionally biased toward basic residues; sequence KSARSKRKAI. Basic and acidic residues predominate over residues 129–142; sequence KSSEKSSKDGNKEG. The GRAS domain maps to 136 to 510; sequence KDGNKEGRWA…EAVSFCSLWK (375 aa). The segment at 143–205 is leucine repeat I (LRI); that stretch reads RWAEKLLNPC…HLSSSSVSSS (63 aa). Residues 224–294 are VHIID; the sequence is LLKFYEVSPW…GPPPRVRITV (71 aa). Positions 259 to 263 match the VHIID motif; sequence LHIID. Positions 312–337 are leucine repeat II (LRII); that stretch reads NYGSQLLGFARSLKINLQISVLDKLQ. Residues 347–435 form a PFYRE region; that stretch reads LIVCAQFRLH…RKLMEGEATK (89 aa). An SAW region spans residues 438–510; it reads MNAGDMNEGK…EAVSFCSLWK (73 aa).

Belongs to the GRAS family. In terms of tissue distribution, expressed in seedlings, roots and flowers.

The protein resides in the nucleus. In terms of biological role, probable transcription factor involved in plant development. This is Scarecrow-like protein 29 (SCL29) from Arabidopsis thaliana (Mouse-ear cress).